The following is a 593-amino-acid chain: ETS-related transcription factor Elf-2 (593 aa).

Residues 1 to 34 (MASAVVDSGGSALELPSDGGENQEGGDTGPDCPA) are disordered. Ser-107 bears the Phosphoserine mark. Positions 146–199 (VEVSTEESEPMDASPIPTSPDSHEPMKKKKVGRKPKTQQSPVSNGSPELGIKKK) are disordered. The segment covering 171–181 (MKKKKVGRKPK) has biased composition (basic residues). Thr-182 is subject to Phosphothreonine. A compositionally biased stretch (polar residues) spans 182–191 (TQQSPVSNGS). Phosphoserine is present on residues Ser-185 and Ser-191. The ETS DNA-binding region spans 208–290 (TYLWEFLLDL…EGQRLVYQFK (83 aa)). The disordered stretch occupies residues 362–383 (TSPTHDGSSRSPTTTAPVSAAA). Residues Ser-363 and Ser-372 each carry the phosphoserine modification. The span at 370-383 (SRSPTTTAPVSAAA) shows a compositional bias: low complexity. A Phosphothreonine modification is found at Thr-376. Ser-432 carries the post-translational modification Phosphoserine. At Arg-496 the chain carries Omega-N-methylarginine. Residue Thr-523 is modified to Phosphothreonine. Lys-538 participates in a covalent cross-link: Glycyl lysine isopeptide (Lys-Gly) (interchain with G-Cter in SUMO2).

It belongs to the ETS family. In terms of assembly, interacts with LIM domains of LMO2. Interacts via its N-terminal region with RUNX1. As to expression, expressed in all tissues examined. Highest levels in thymocytes and bone marrow.

Its subcellular location is the nucleus. Its function is as follows. Probably transcriptionally activates the LYN and BLK promoters and acts synergistically with RUNX1 to transactivate the BLK promoter. This chain is ETS-related transcription factor Elf-2, found in Mus musculus (Mouse).